Consider the following 195-residue polypeptide: Cytochrome c oxidase assembly protein CtaG (195 aa).

Topologically, residues 1-9 are cytoplasmic; it reads MALNGPQKT. The helical; Signal-anchor for type II membrane protein transmembrane segment at 10 to 30 threads the bilayer; that stretch reads VVQLVGVVVLMGGLAWASVPF. Residues 31–195 are Periplasmic-facing; the sequence is YDWFCRVTGF…DTSGAETELN (165 aa).

The protein belongs to the COX11/CtaG family.

The protein resides in the cell inner membrane. Its function is as follows. Exerts its effect at some terminal stage of cytochrome c oxidase synthesis, probably by being involved in the insertion of the copper B into subunit I. The protein is Cytochrome c oxidase assembly protein CtaG of Ruegeria sp. (strain TM1040) (Silicibacter sp.).